The chain runs to 1167 residues: Non-toxic nonhemagglutinin (1167 aa).

Residues 1 to 381 are light chain nLC; that stretch reads MDIIDNVDIT…PQQIINLIDN (381 aa). Residues 382–804 form an N-heavy chain nHN region; it reads NNILLIKSYI…LFNSKIQLTI (423 aa). The tract at residues 805–1167 is C-heavy chain nHC; sequence KNEKPEYNLL…LNDIYSWTLI (363 aa).

It belongs to the botulism non-toxic nonhemagglutinin family.

In terms of biological role, expression of the ptox operon (ntnh-orfX1-orfX2-orfX3-pmp1) in B.thuringiensis kills Anopheles but not Aedes mosquito 3rd instar larvae. The ntnh-pmp1 construct is about half as toxic. This chain is Non-toxic nonhemagglutinin, found in Paraclostridium bifermentans (Clostridium bifermentans).